The primary structure comprises 196 residues: DnaA initiator-associating protein DiaA (196 aa).

The 163-residue stretch at 34 to 196 (LVHSLLNGNK…DNTLFPHQDD (163 aa)) folds into the SIS domain.

This sequence belongs to the SIS family. DiaA subfamily. Homotetramer; dimer of dimers.

Required for the timely initiation of chromosomal replication via direct interactions with the DnaA initiator protein. The protein is DnaA initiator-associating protein DiaA of Citrobacter koseri (strain ATCC BAA-895 / CDC 4225-83 / SGSC4696).